Reading from the N-terminus, the 206-residue chain is dTTP/UTP pyrophosphatase (206 aa).

Catalysis depends on Asp-79, which acts as the Proton acceptor.

The protein belongs to the Maf family. YhdE subfamily. The cofactor is a divalent metal cation.

The protein resides in the cytoplasm. It carries out the reaction dTTP + H2O = dTMP + diphosphate + H(+). The catalysed reaction is UTP + H2O = UMP + diphosphate + H(+). Nucleoside triphosphate pyrophosphatase that hydrolyzes dTTP and UTP. May have a dual role in cell division arrest and in preventing the incorporation of modified nucleotides into cellular nucleic acids. This chain is dTTP/UTP pyrophosphatase, found in Rhizobium johnstonii (strain DSM 114642 / LMG 32736 / 3841) (Rhizobium leguminosarum bv. viciae).